Reading from the N-terminus, the 400-residue chain is Renin (400 aa).

A signal peptide spans 1–23 (MDAWRGMPRWGLLLLLWGSCTFG). A propeptide spans 24–60 (LPTETTTFKRISLKRMPSIRESLKERGVDMARLGPER) (activation peptide). Residue N65 is glycosylated (N-linked (GlcNAc...) asparagine). One can recognise a Peptidase A1 domain in the interval 80–397 (YYGEIGIGTP…DRGNNRIGFA (318 aa)). D98 is an active-site residue. The cysteines at positions 111 and 118 are disulfide-linked. N135 carries N-linked (GlcNAc...) asparagine glycosylation. A disulfide bridge links C277 with C281. The active site involves D286. C319 and C356 are disulfide-bonded.

This sequence belongs to the peptidase A1 family. In terms of assembly, interacts with ATP6AP2.

It localises to the secreted. Its subcellular location is the membrane. It catalyses the reaction Cleavage of Leu-|-Xaa bond in angiotensinogen to generate angiotensin I.. With respect to regulation, interaction with ATP6AP2 results in a 5-fold increased efficiency in angiotensinogen processing. In terms of biological role, renin is a highly specific endopeptidase, whose only known function is to generate angiotensin I from angiotensinogen in the plasma, initiating a cascade of reactions that produce an elevation of blood pressure and increased sodium retention by the kidney. The protein is Renin (REN) of Callithrix jacchus (White-tufted-ear marmoset).